A 146-amino-acid polypeptide reads, in one-letter code: Late protein OPG112 (146 aa).

The helical transmembrane segment at 10–32 threads the bilayer; sequence LAMTAFFGELNTLDIMALIMSIF.

This sequence belongs to the orthopoxvirus OPG112 family.

Its subcellular location is the host membrane. The protein localises to the host cytoplasm. Its function is as follows. Contributes to the formation of crescents and immature virions (IV). Interacts with phosphatidylinositol-3-phosphate (PI3P) and phosphatidylinositol-4-phosphate (PI4P) lipids in order to form virion membranes. Mechanistically, mediates proper formation of OPG125-hexamers, and hence the honey comb lattice and spherical immature virus. This chain is Late protein OPG112 (OPG112), found in Vaccinia virus (strain Ankara) (VACV).